The primary structure comprises 650 residues: Macrolide export ATP-binding/permease protein MacB (650 aa).

The 240-residue stretch at 9-248 (IELIDLERVF…RPLGRPPGGA (240 aa)) folds into the ABC transporter domain. ATP is bound at residue 45 to 52 (GQSGSGKS). A run of 4 helical transmembrane segments spans residues 276–296 (ALTLLGVVIGVAAVVTMMAIG), 525–545 (LTLLLGAVALISLLVGGIGVM), 580–600 (AVAVCGVGGLAGVGLGLGAAL), and 615–635 (PPIVAFCCAFLTGLLFGYLPA).

The protein belongs to the ABC transporter superfamily. Macrolide exporter (TC 3.A.1.122) family. In terms of assembly, homodimer.

The protein resides in the cell inner membrane. Non-canonical ABC transporter that contains transmembrane domains (TMD), which form a pore in the inner membrane, and an ATP-binding domain (NBD), which is responsible for energy generation. Confers resistance against macrolides. The sequence is that of Macrolide export ATP-binding/permease protein MacB from Rhodospirillum rubrum (strain ATCC 11170 / ATH 1.1.1 / DSM 467 / LMG 4362 / NCIMB 8255 / S1).